The following is a 159-amino-acid chain: Large ribosomal subunit protein bL35c (159 aa).

The transit peptide at 1–86 (MAMASATATL…TSSPSFTVFA (86 aa)) directs the protein to the chloroplast.

In terms of assembly, component of the chloroplast large ribosomal subunit (LSU). Mature 70S chloroplast ribosomes of higher plants consist of a small (30S) and a large (50S) subunit. The 30S small subunit contains 1 molecule of ribosomal RNA (16S rRNA) and 24 different proteins. The 50S large subunit contains 3 rRNA molecules (23S, 5S and 4.5S rRNA) and 33 different proteins.

Its subcellular location is the plastid. It localises to the chloroplast. Component of the chloroplast ribosome (chloro-ribosome), a dedicated translation machinery responsible for the synthesis of chloroplast genome-encoded proteins, including proteins of the transcription and translation machinery and components of the photosynthetic apparatus. The polypeptide is Large ribosomal subunit protein bL35c (RPL35) (Spinacia oleracea (Spinach)).